Consider the following 148-residue polypeptide: Putative cyclin-dependent kinase inhibitor SPL2 (148 aa).

Residues Ser59 and Ser86 each carry the phosphoserine modification.

Its subcellular location is the cytoplasmic granule. The protein localises to the cytoplasm. In terms of biological role, putative cyclin-dependent kinase (CDK) inhibitor necessary and sufficient for PHO pathway-dependent down-regulation of low-affinity phosphate transport. The protein is Putative cyclin-dependent kinase inhibitor SPL2 (SPL2) of Saccharomyces cerevisiae (strain YJM789) (Baker's yeast).